The primary structure comprises 77 residues: U8-lycotoxin-Ls1a (77 aa).

The signal sequence occupies residues 1 to 20 (MKLIIFTGLVLFAIVSLIEA). Residues 21 to 26 (QAENEK) constitute a propeptide that is removed on maturation.

This sequence belongs to the neurotoxin 19 (CSTX) family. 08 (U8-Lctx) subfamily. Post-translationally, contains 4 disulfide bonds. As to expression, expressed by the venom gland.

The protein resides in the secreted. This chain is U8-lycotoxin-Ls1a, found in Lycosa singoriensis (Wolf spider).